The following is a 310-amino-acid chain: Glutaminase 1 (310 aa).

Substrate-binding residues include serine 66, asparagine 117, glutamate 161, asparagine 168, tyrosine 192, tyrosine 244, and valine 262. Residue lysine 294 is modified to N6-acetyllysine.

Belongs to the glutaminase family. In terms of assembly, homotetramer.

The enzyme catalyses L-glutamine + H2O = L-glutamate + NH4(+). The polypeptide is Glutaminase 1 (Escherichia coli O6:H1 (strain CFT073 / ATCC 700928 / UPEC)).